The chain runs to 297 residues: Adrenocorticotropic hormone receptor (297 aa).

Residues 1–23 (MKHIINSYENINNTARNNSDCPR) are Extracellular-facing. N12 and N17 each carry an N-linked (GlcNAc...) asparagine glycan. Cystine bridges form between C21–C253 and C245–C251. The chain crosses the membrane as a helical span at residues 24-49 (VVLPEEIFFTISIVGVLENLIVLLAV). Residues 50–58 (FKNKNLQAP) lie on the Cytoplasmic side of the membrane. The chain crosses the membrane as a helical span at residues 59–79 (MYFFICSLAISDMLGSLYKIL). Over 80–104 (ENILIILRNMGYLKPRGSFETTADD) the chain is Extracellular. The helical transmembrane segment at 105-126 (IIDSLFVLSLLGSIFSLSVIAA) threads the bilayer. At 127 to 147 (DRYITIFHALRYHSIVTMRRT) the chain is on the cytoplasmic side. The helical transmembrane segment at 148 to 168 (VVVLTVIWTFCTGTGITMVIF) threads the bilayer. Residues 169–180 (SHHVPTVITFTS) are Extracellular-facing. Residues 181-199 (LFPLMLVFILCLYVHMFLL) form a helical membrane-spanning segment. Over 200 to 217 (ARSHTRKISTLPRANMKG) the chain is Cytoplasmic. Residues 218-244 (AITLTILLGVFIFCWAPFVLHVLLMTF) traverse the membrane as a helical segment. The Extracellular portion of the chain corresponds to 245–256 (CPSNPYCACYMS). Residues 257–278 (LFQVNGMLIMCNAVIDPFIYAF) traverse the membrane as a helical segment. Topologically, residues 279 to 297 (RSPELRDAFKKMIFCSRYW) are cytoplasmic. C293 carries S-palmitoyl cysteine lipidation.

It belongs to the G-protein coupled receptor 1 family. As to quaternary structure, homodimer. Interacts with corticotropin (ACTH). Interacts with MRAP; this interaction targets MC2R to the plasma membrane. Interacts with MRAP2; competing with MRAP for binding to MC2R and impairing the binding of corticotropin (ACTH). Post-translationally, ubiquitinated by MGRN1 that may be involved in post-endocytic trafficking and/or degradation of internalized receptor. As to expression, melanocytes and corticoadrenal tissue.

The protein localises to the cell membrane. Hormone receptor primarily expressed in adrenal cortex that plays a key role in regulating adrenocortical function. Upon corticotropin (ACTH) binding, facilitates the release of adrenal glucocorticoids, including cortisol and corticosterone. In addition, MC2R is required for fetal and neonatal adrenal gland development. Mechanistically, activates adenylate cyclase (cAMP), the MAPK cascade as well as the cAMP-dependent protein kinase A pathway leading to steroidogenic factor 1/NR5A1-mediated transcriptional activation. This chain is Adrenocorticotropic hormone receptor (MC2R), found in Homo sapiens (Human).